Consider the following 568-residue polypeptide: Potassium-transporting ATPase potassium-binding subunit (568 aa).

10 helical membrane passes run 3–23 (TEVLGVIAQIVLMVVLSYPLG), 68–88 (LLVVNLFWFLWGMVLLVTQGV), 133–153 (FVIMLFQFITAATGMAAMAGI), 180–200 (LLPLSLVVGFILIVQGTPMGF), 256–276 (VECWSILIIPMAMAFAFGFYL), 281–301 (LGYSIYGVMLFAYLVGVCINV), 375–395 (FGGVGVGWMNYFTFIIIAVFI), 421–441 (IVALLHPFIILVGTALAAYLF), 497–517 (IVLILGRFVPIVGQVAIAGIL), and 535–555 (VTFGVMTFAVIFIVAALSFFP).

Belongs to the KdpA family. In terms of assembly, the system is composed of three essential subunits: KdpA, KdpB and KdpC.

Its subcellular location is the cell inner membrane. In terms of biological role, part of the high-affinity ATP-driven potassium transport (or Kdp) system, which catalyzes the hydrolysis of ATP coupled with the electrogenic transport of potassium into the cytoplasm. This subunit binds the periplasmic potassium ions and delivers the ions to the membrane domain of KdpB through an intramembrane tunnel. The protein is Potassium-transporting ATPase potassium-binding subunit of Phocaeicola vulgatus (strain ATCC 8482 / DSM 1447 / JCM 5826 / CCUG 4940 / NBRC 14291 / NCTC 11154) (Bacteroides vulgatus).